The following is a 352-amino-acid chain: Photosystem II D2 protein (352 aa).

T2 carries the post-translational modification N-acetylthreonine. T2 is subject to Phosphothreonine. The helical transmembrane segment at 40–60 (CAYFAVGGWLTGTTFVTSWYT) threads the bilayer. H117 lines the chlorophyll a pocket. A helical transmembrane segment spans residues 124-140 (GFMLRQFEIARAIGLRP). Residues Q129 and N142 each contribute to the pheophytin a site. Residues 152-165 (VFVSVFLIYPLGQS) traverse the membrane as a helical segment. Residue H197 coordinates chlorophyll a. Residues 207 to 227 (AALLCAIHGATVENTLFEDGD) form a helical membrane-spanning segment. 2 residues coordinate a plastoquinone: H214 and F261. H214 serves as a coordination point for Fe cation. H268 is a binding site for Fe cation. The helical transmembrane segment at 278–294 (GLWMSAIGVVGLALNLR) threads the bilayer.

Belongs to the reaction center PufL/M/PsbA/D family. As to quaternary structure, PSII is composed of 1 copy each of membrane proteins PsbA, PsbB, PsbC, PsbD, PsbE, PsbF, PsbH, PsbI, PsbJ, PsbK, PsbL, PsbM, PsbT, PsbX, PsbY, PsbZ, Psb30/Ycf12, at least 3 peripheral proteins of the oxygen-evolving complex and a large number of cofactors. It forms dimeric complexes. The cofactor is The D1/D2 heterodimer binds P680, chlorophylls that are the primary electron donor of PSII, and subsequent electron acceptors. It shares a non-heme iron and each subunit binds pheophytin, quinone, additional chlorophylls, carotenoids and lipids. There is also a Cl(-1) ion associated with D1 and D2, which is required for oxygen evolution. The PSII complex binds additional chlorophylls, carotenoids and specific lipids..

The protein localises to the plastid. Its subcellular location is the chloroplast thylakoid membrane. It carries out the reaction 2 a plastoquinone + 4 hnu + 2 H2O = 2 a plastoquinol + O2. Photosystem II (PSII) is a light-driven water:plastoquinone oxidoreductase that uses light energy to abstract electrons from H(2)O, generating O(2) and a proton gradient subsequently used for ATP formation. It consists of a core antenna complex that captures photons, and an electron transfer chain that converts photonic excitation into a charge separation. The D1/D2 (PsbA/PsbD) reaction center heterodimer binds P680, the primary electron donor of PSII as well as several subsequent electron acceptors. D2 is needed for assembly of a stable PSII complex. The chain is Photosystem II D2 protein from Nephroselmis olivacea (Green alga).